We begin with the raw amino-acid sequence, 606 residues long: DNA mismatch repair protein MutL (606 aa).

The segment at 377–401 is disordered; the sequence is HRPLFAPQPAPQPDREPPLPDSGSR.

It belongs to the DNA mismatch repair MutL/HexB family.

Its function is as follows. This protein is involved in the repair of mismatches in DNA. It is required for dam-dependent methyl-directed DNA mismatch repair. May act as a 'molecular matchmaker', a protein that promotes the formation of a stable complex between two or more DNA-binding proteins in an ATP-dependent manner without itself being part of a final effector complex. The sequence is that of DNA mismatch repair protein MutL from Geobacter sulfurreducens (strain ATCC 51573 / DSM 12127 / PCA).